The sequence spans 292 residues: 4-hydroxy-tetrahydrodipicolinate synthase (292 aa).

A pyruvate-binding site is contributed by Thr48. Tyr136 (proton donor/acceptor) is an active-site residue. The active-site Schiff-base intermediate with substrate is Lys164. Ile204 is a binding site for pyruvate.

It belongs to the DapA family. Homotetramer; dimer of dimers.

It localises to the cytoplasm. It catalyses the reaction L-aspartate 4-semialdehyde + pyruvate = (2S,4S)-4-hydroxy-2,3,4,5-tetrahydrodipicolinate + H2O + H(+). It functions in the pathway amino-acid biosynthesis; L-lysine biosynthesis via DAP pathway; (S)-tetrahydrodipicolinate from L-aspartate: step 3/4. Catalyzes the condensation of (S)-aspartate-beta-semialdehyde [(S)-ASA] and pyruvate to 4-hydroxy-tetrahydrodipicolinate (HTPA). The chain is 4-hydroxy-tetrahydrodipicolinate synthase from Acetivibrio thermocellus (strain ATCC 27405 / DSM 1237 / JCM 9322 / NBRC 103400 / NCIMB 10682 / NRRL B-4536 / VPI 7372) (Clostridium thermocellum).